The chain runs to 271 residues: uncharacterized protein (271 aa).

The next 3 helical transmembrane spans lie at 11-33 (GWLALALVVVAFTYLCFTVLAPW), 172-194 (SINTGQVAALTGVQLAGSYLQLI), and 214-236 (FLSYGIQWISFGILAPIGLGYFA). The interval 245–271 (REKAGSPPPDKPMTVEQKLADRYGRRR) is disordered. A compositionally biased stretch (basic and acidic residues) spans 262–271 (KLADRYGRRR).

The protein belongs to the SURF1 family.

The protein resides in the cell membrane. This is an uncharacterized protein from Mycobacterium tuberculosis (strain CDC 1551 / Oshkosh).